Reading from the N-terminus, the 580-residue chain is mRNA-decapping enzyme 1A (580 aa).

At serine 62 the chain carries Phosphoserine. The segment covering 132-141 has biased composition (basic and acidic residues); it reads RSQQAARDKQ. Disordered stretches follow at residues 132–154, 172–209, and 245–276; these read RSQQ…DHRP, QMGD…QDKS, and LPGD…NMGI. Serine 142, serine 179, and serine 180 each carry phosphoserine. Polar residues predominate over residues 173–196; the sequence is MGDSNISSPGLQPSTQISNLGSTE. Residues 253 to 264 are compositionally biased toward low complexity; that stretch reads EPSSFLPFSFEP. Phosphoserine occurs at positions 319 and 334. The segment covering 343 to 359 has biased composition (polar residues); it reads QAVKTTPRQRSPLSSQP. A disordered region spans residues 343 to 371; sequence QAVKTTPRQRSPLSSQPVPELSQASLAAS. Threonine 348 is subject to Phosphothreonine. At serine 353 the chain carries Phosphoserine. Asymmetric dimethylarginine is present on arginine 376. The residue at position 401 (threonine 401) is a Phosphothreonine. Serine 422, serine 520, serine 521, and serine 523 each carry phosphoserine. Positions 510–533 are disordered; the sequence is TRSSDLERKASSPSPLTVGTSENQ. Over residues 520–531 the composition is skewed to polar residues; the sequence is SSPSPLTVGTSE. A phosphothreonine mark is found at threonine 526 and threonine 529.

This sequence belongs to the DCP1 family. As to quaternary structure, forms a complex with EDC3, DCP2, DDX6 and EDC4/HEDLS, within this complex directly interacts with EDC3. Part of a cytoplasmic complex containing proteins involved in mRNA decay, including XRN1 and LSM1. Interacts with DCP1B. Interacts with DCP2. Interacts with DDX17 in an RNA-independent manner. Interacts with PNRC2. Interacts with SMAD4. Interacts with UPF1. Interacts with ZC3HAV1. Interacts with ZFP36L1. Interacts with NBDY. Interacts with DHX34; the interaction is RNA-independent. In terms of processing, (Microbial infection) Cleaved by porcine reproductive and respiratory syndrome virus serine protease nsp4 after Glu-238. The cleavage inhibits DCP1A function.

The protein localises to the cytoplasm. Its subcellular location is the P-body. It localises to the nucleus. The catalysed reaction is a 5'-end (N(7)-methyl 5'-triphosphoguanosine)-ribonucleoside in mRNA + H2O = N(7)-methyl-GDP + a 5'-end phospho-ribonucleoside in mRNA + 2 H(+). In terms of biological role, necessary for the degradation of mRNAs, both in normal mRNA turnover and in nonsense-mediated mRNA decay. Removes the 7-methyl guanine cap structure from mRNA molecules, yielding a 5'-phosphorylated mRNA fragment and 7m-GDP. Contributes to the transactivation of target genes after stimulation by TGFB1. Essential for embryonic development. This is mRNA-decapping enzyme 1A (DCP1A) from Sus scrofa (Pig).